A 609-amino-acid chain; its full sequence is Putative transcriptional regulatory protein y4pA (609 aa).

The 221-residue stretch at 313–533 (IVGRSPSIQQ…LRSVLETAAI (221 aa)) folds into the Sigma-54 factor interaction domain. 395–404 (HPKATLLIES) contributes to the ATP binding site. A DNA-binding region (H-T-H motif) is located at residues 578–597 (RGEAARYLGISRKTLYNKMR).

Functionally, probable transcriptional regulator that acts in conjunction with sigma-54. In Sinorhizobium fredii (strain NBRC 101917 / NGR234), this protein is Putative transcriptional regulatory protein y4pA.